The sequence spans 1509 residues: Putative endo-alpha-N-acetylgalactosaminidase (1509 aa).

A signal peptide spans 1–41; it reads MPFRGRRRQSALRGLSLAATFCLAAGSSGISGALFATPAQA. Positions 288, 290, 292, 294, and 299 each coordinate Ca(2+). Positions 313–585 are catalytic; sequence GGDDVKNRVV…NLPVKFLQQQ (273 aa). Substrate is bound at residue Asp369. The Nucleophile role is filled by Asp472. Glu498 serves as the catalytic Proton donor/acceptor. Positions 878, 880, 926, and 929 each coordinate Ca(2+). 2 disordered regions span residues 1176–1197 and 1403–1439; these read NGWG…DGPP and IKAA…SGGG. Low complexity predominate over residues 1407–1428; it reads NPNPGTGSNPGTGSNPGTDPGT. Over residues 1429 to 1439 the composition is skewed to gly residues; it reads GSAGGNSSGGG. The short motif at 1475–1479 is the LPXTG sorting signal element; that stretch reads LAETG. Position 1478 is a pentaglycyl murein peptidoglycan amidated threonine (Thr1478). The propeptide at 1479 to 1509 is removed by sortase; the sequence is GFSGLVLPLGIGLMLLLIGAAAIIVRRHRHS.

It belongs to the glycosyl hydrolase 101 family. A subfamily.

The protein resides in the secreted. Its subcellular location is the cell wall. The catalysed reaction is a 3-O-[beta-D-galactosyl-(1-&gt;3)-N-acetyl-alpha-D-galactosaminyl]-L-threonyl-[protein] + H2O = beta-D-galactosyl-(1-&gt;3)-N-acetyl-D-galactosamine + L-threonyl-[protein]. It carries out the reaction a 3-O-[beta-D-galactosyl-(1-&gt;3)-N-acetyl-alpha-D-galactosaminyl]-L-seryl-[protein] + H2O = beta-D-galactosyl-(1-&gt;3)-N-acetyl-D-galactosamine + L-seryl-[protein]. Functionally, probably involved in the breakdown of mucin-type O-linked glycans. Specifically removes the T-antigen disaccharide (Gal-beta-1,3-GalNAc-alpha) from extracellular host glycoproteins. The sequence is that of Putative endo-alpha-N-acetylgalactosaminidase from Renibacterium salmoninarum (strain ATCC 33209 / DSM 20767 / JCM 11484 / NBRC 15589 / NCIMB 2235).